Reading from the N-terminus, the 290-residue chain is 4-hydroxybenzoate octaprenyltransferase (290 aa).

Helical transmembrane passes span 33 to 53 (LAAL…AVFV), 91 to 111 (LGVR…FVLV), 116 to 136 (WEAV…PFTK), 138 to 158 (FFAM…VIAF), 165 to 185 (VPAT…AYDT), 212 to 232 (VAAI…VLAP), 237 to 257 (WPLW…FTLI), and 269 to 289 (FSKS…GYLL).

The protein belongs to the UbiA prenyltransferase family. Requires Mg(2+) as cofactor.

The protein localises to the cell inner membrane. It carries out the reaction all-trans-octaprenyl diphosphate + 4-hydroxybenzoate = 4-hydroxy-3-(all-trans-octaprenyl)benzoate + diphosphate. It functions in the pathway cofactor biosynthesis; ubiquinone biosynthesis. Its function is as follows. Catalyzes the prenylation of para-hydroxybenzoate (PHB) with an all-trans polyprenyl group. Mediates the second step in the final reaction sequence of ubiquinone-8 (UQ-8) biosynthesis, which is the condensation of the polyisoprenoid side chain with PHB, generating the first membrane-bound Q intermediate 3-octaprenyl-4-hydroxybenzoate. The polypeptide is 4-hydroxybenzoate octaprenyltransferase (Acidovorax ebreus (strain TPSY) (Diaphorobacter sp. (strain TPSY))).